Consider the following 151-residue polypeptide: Ribonuclease H (151 aa).

One can recognise an RNase H type-1 domain in the interval 1–143 (MEEYVIYTDG…VDRVARKEAA (143 aa)). Mg(2+)-binding residues include D9, E48, D71, and D135.

It belongs to the RNase H family. As to quaternary structure, monomer. Mg(2+) is required as a cofactor.

Its subcellular location is the cytoplasm. It catalyses the reaction Endonucleolytic cleavage to 5'-phosphomonoester.. Endonuclease that specifically degrades the RNA of RNA-DNA hybrids. This is Ribonuclease H from Neorickettsia sennetsu (strain ATCC VR-367 / Miyayama) (Ehrlichia sennetsu).